The sequence spans 135 residues: CDGSH iron-sulfur domain-containing protein 2B (135 aa).

Over 1-37 (MVLETISKIIKTQLPAYLKKFPLPETIGGFARLTVLD) the chain is Lumenal. Residues 38–60 (WLRLLPLLGILALLGYLTIRPFL) traverse the membrane as a helical segment. The Cytoplasmic segment spans residues 61 to 135 (PKKKKQKDSL…GPLILKKKIL (75 aa)). [2Fe-2S] cluster is bound by residues Cys99, Cys101, Cys110, and His114.

Belongs to the CISD protein family. CISD2 subfamily. In terms of assembly, homodimer. The cofactor is [2Fe-2S] cluster.

It is found in the endoplasmic reticulum membrane. The protein localises to the mitochondrion outer membrane. Its function is as follows. Regulator of autophagy that contributes to antagonize becn1-mediated cellular autophagy at the endoplasmic reticulum. Participates in the interaction of bcl2 with becn1 and is required for bcl2-mediated depression of endoplasmic reticulum Ca(2+) stores during autophagy. This Salmo salar (Atlantic salmon) protein is CDGSH iron-sulfur domain-containing protein 2B (cisd2b).